We begin with the raw amino-acid sequence, 366 residues long: 8-hydroxyquercetin 8-O-methyltransferase (366 aa).

S-adenosyl-L-methionine is bound by residues 207–210 (VGGG), 231–232 (DL), 251–252 (DM), and lysine 265. The active-site Proton acceptor is histidine 269.

Belongs to the class I-like SAM-binding methyltransferase superfamily. Cation-independent O-methyltransferase family. COMT subfamily. As to quaternary structure, homodimer.

It carries out the reaction 3,3',4',5,7,8-hexahydroxyflavone + S-adenosyl-L-methionine = 3,3',4',5,7-pentahydroxy-8-methoxyflavone + S-adenosyl-L-homocysteine + H(+). The catalysed reaction is 4',7,8-trihydroxyflavone + S-adenosyl-L-methionine = 4',7-dihydroxy-8-methoxyflavone + S-adenosyl-L-homocysteine + H(+). It catalyses the reaction 8-hydroxy-7-methoxyflavone + S-adenosyl-L-methionine = 7,8-dimethoxyflavone + S-adenosyl-L-homocysteine + H(+). Its pathway is flavonoid metabolism. Functionally, flavonoid 8-O-methyltransferase involved in the biosynthesis of polymethoxylated flavonoids natural products such as pebrellin, aroma compounds which contribute to the flavor of peppermint, and exhibit pharmacological activities such as anti-allergic, anti-oxidant, antibacterial, anti-proliferative, and anti-inflammatory effects. Catalyzes S-adenosylmethionine-dependent regioselective 8-O-methylation of flavonoids; active on various hydroxylated flavonoid substrates, including 7,8,3'4'-tetrahydroxy-flavone, 7,8,4'-trihydroxy-flavone and 8-hydroxy-flavone 7-methyl ether. The sequence is that of 8-hydroxyquercetin 8-O-methyltransferase from Mentha piperita (Peppermint).